The sequence spans 187 residues: UPF0301 protein Sala_0165 (187 aa).

The protein belongs to the UPF0301 (AlgH) family.

The polypeptide is UPF0301 protein Sala_0165 (Sphingopyxis alaskensis (strain DSM 13593 / LMG 18877 / RB2256) (Sphingomonas alaskensis)).